Here is a 294-residue protein sequence, read N- to C-terminus: Mitochondrial HMG-box protein CIM1 (294 aa).

A mitochondrion-targeting transit peptide spans methionine 1–serine 90. The tract at residues asparagine 27 to glutamate 102 is HMG-box A. Positions proline 110–isoleucine 258 are HMG-box B.

It localises to the mitochondrion matrix. In terms of biological role, mitochondrial HMG-box protein that limits the copy number of mitochondrial DNA (mtDNA), antagonizing HMG-box containing protein ABF2, a mtDNA packaging factor. The chain is Mitochondrial HMG-box protein CIM1 from Saccharomyces cerevisiae (strain ATCC 204508 / S288c) (Baker's yeast).